Consider the following 146-residue polypeptide: uncharacterized protein (146 aa).

Positions 31–119 (EKVMIVEGKS…RAYKEVAAAP (89 aa)) constitute a Toprim domain.

This is an uncharacterized protein from Bacillus subtilis (strain 168).